The following is a 347-amino-acid chain: D-fructose 1,6-bisphosphatase class 2/sedoheptulose 1,7-bisphosphatase (347 aa).

Mn(2+) contacts are provided by D33, E57, D97, and E100. Substrate-binding positions include E100–T102, Y131, R176–R178, and D198–D200. E225 serves as a coordination point for Mn(2+).

It belongs to the FBPase class 2 family. As to quaternary structure, homotetramer. The cofactor is Mn(2+).

The catalysed reaction is beta-D-fructose 1,6-bisphosphate + H2O = beta-D-fructose 6-phosphate + phosphate. It catalyses the reaction D-sedoheptulose 1,7-bisphosphate + H2O = D-sedoheptulose 7-phosphate + phosphate. The protein operates within carbohydrate biosynthesis; Calvin cycle. Functionally, catalyzes the hydrolysis of fructose 1,6-bisphosphate (Fru 1,6-P2) and sedoheptulose 1,7-bisphosphate (Sed 1,7-P2) to fructose 6-phosphate and sedoheptulose 7-phosphate, respectively. The chain is D-fructose 1,6-bisphosphatase class 2/sedoheptulose 1,7-bisphosphatase from Thermosynechococcus vestitus (strain NIES-2133 / IAM M-273 / BP-1).